The primary structure comprises 481 residues: Ribosomal protein uS12 methylthiotransferase RimO (481 aa).

An MTTase N-terminal domain is found at Asn-38–Pro-148. Cys-47, Cys-83, Cys-112, Cys-180, Cys-184, and Cys-187 together coordinate [4Fe-4S] cluster. One can recognise a Radical SAM core domain in the interval Leu-166–Glu-403. Residues Ala-406–Asp-472 enclose the TRAM domain.

The protein belongs to the methylthiotransferase family. RimO subfamily. It depends on [4Fe-4S] cluster as a cofactor.

The protein resides in the cytoplasm. It carries out the reaction L-aspartate(89)-[ribosomal protein uS12]-hydrogen + (sulfur carrier)-SH + AH2 + 2 S-adenosyl-L-methionine = 3-methylsulfanyl-L-aspartate(89)-[ribosomal protein uS12]-hydrogen + (sulfur carrier)-H + 5'-deoxyadenosine + L-methionine + A + S-adenosyl-L-homocysteine + 2 H(+). In terms of biological role, catalyzes the methylthiolation of an aspartic acid residue of ribosomal protein uS12. In Shewanella oneidensis (strain ATCC 700550 / JCM 31522 / CIP 106686 / LMG 19005 / NCIMB 14063 / MR-1), this protein is Ribosomal protein uS12 methylthiotransferase RimO.